Here is a 308-residue protein sequence, read N- to C-terminus: Putative hydrolase MT0526 (308 aa).

A disordered region spans residues 1 to 48 (MMVSSHLGSPDQAGHVDLASPADPPPPDASASHSPVDMPAPVAAAGSD). Asp62 acts as the Nucleophile in catalysis. Residues Asp62, Asp64, and Asp237 each coordinate Mg(2+). Asp64 serves as the catalytic Proton donor.

This sequence belongs to the HAD-like hydrolase superfamily. SerB family. Mg(2+) serves as cofactor.

The polypeptide is Putative hydrolase MT0526 (Mycobacterium tuberculosis (strain CDC 1551 / Oshkosh)).